The following is a 288-amino-acid chain: 4-hydroxy-tetrahydrodipicolinate synthase (288 aa).

Residue Thr42 participates in pyruvate binding. Tyr129 (proton donor/acceptor) is an active-site residue. The active-site Schiff-base intermediate with substrate is Lys158. Ile200 serves as a coordination point for pyruvate.

Belongs to the DapA family. Homotetramer; dimer of dimers.

Its subcellular location is the cytoplasm. The catalysed reaction is L-aspartate 4-semialdehyde + pyruvate = (2S,4S)-4-hydroxy-2,3,4,5-tetrahydrodipicolinate + H2O + H(+). It participates in amino-acid biosynthesis; L-lysine biosynthesis via DAP pathway; (S)-tetrahydrodipicolinate from L-aspartate: step 3/4. Its function is as follows. Catalyzes the condensation of (S)-aspartate-beta-semialdehyde [(S)-ASA] and pyruvate to 4-hydroxy-tetrahydrodipicolinate (HTPA). The sequence is that of 4-hydroxy-tetrahydrodipicolinate synthase from Thermosipho melanesiensis (strain DSM 12029 / CIP 104789 / BI429).